The chain runs to 183 residues: Oligoribonuclease (183 aa).

Residues 9-172 (LIWIDLEMTG…DDIRDSISEL (164 aa)) enclose the Exonuclease domain. Tyrosine 130 is an active-site residue.

It belongs to the oligoribonuclease family.

It localises to the cytoplasm. Its function is as follows. 3'-to-5' exoribonuclease specific for small oligoribonucleotides. This chain is Oligoribonuclease, found in Acinetobacter baylyi (strain ATCC 33305 / BD413 / ADP1).